The primary structure comprises 647 residues: Threonine--tRNA ligase (647 aa).

Positions 1 to 60 constitute a TGS domain; it reads MQVTIEDQSLEAAAGEACGQVLSRAVSGKRLKNAVACLVDGQPRDLAFPLPEDAHELALV. The segment at 242 to 533 is catalytic; that stretch reads DHRKLGAQLD…LIEHTAGALP (292 aa). Cysteine 334, histidine 385, and histidine 510 together coordinate Zn(2+).

It belongs to the class-II aminoacyl-tRNA synthetase family. As to quaternary structure, homodimer. Requires Zn(2+) as cofactor.

The protein localises to the cytoplasm. It catalyses the reaction tRNA(Thr) + L-threonine + ATP = L-threonyl-tRNA(Thr) + AMP + diphosphate + H(+). In terms of biological role, catalyzes the attachment of threonine to tRNA(Thr) in a two-step reaction: L-threonine is first activated by ATP to form Thr-AMP and then transferred to the acceptor end of tRNA(Thr). Also edits incorrectly charged L-seryl-tRNA(Thr). This is Threonine--tRNA ligase from Solidesulfovibrio magneticus (strain ATCC 700980 / DSM 13731 / RS-1) (Desulfovibrio magneticus).